Reading from the N-terminus, the 310-residue chain is Deoxyribonuclease gamma (310 aa).

Positions 1–25 (MSLHPASPRLASLLLFILALHDTLA) are cleaved as a signal peptide. The Bipartite nuclear localization signal signature appears at 40-56 (KKENHEAMDIIVKIIKR). Active-site residues include glutamate 105 and histidine 160. Cysteine 199 and cysteine 236 form a disulfide bridge. The tract at residues 289–310 (SRAFTNNRKSVSLKKRKKGNRS) is not required for free DNA-nuclease activity but required for activity towards liposome-coated DNA. A Nuclear localization signal motif is present at residues 301–307 (LKKRKKG).

It belongs to the DNase I family. Ca(2+) serves as cofactor. The cofactor is Mg(2+). In terms of processing, poly-ADP-ribosylated by PARP1. ADP-ribosylation negatively regulates enzymatic activity during apoptosis. In terms of tissue distribution, expressed at high levels in liver, spleen and testes. Expressed at lower levels in heart, lungs, skeletal muscle and kidney. Not expressed in brain. Predominantly expressed in macrophages; at protein level. Secreted by mononuclear phagocytes.

Its subcellular location is the nucleus. The protein localises to the endoplasmic reticulum. It localises to the secreted. Inhibited by zinc. Inhibited by heparin and proteolysis by plasmin. In terms of biological role, has DNA hydrolytic activity. Is capable of both single- and double-stranded DNA cleavage, producing DNA fragments with 3'-OH ends. Can cleave chromatin to nucleosomal units and cleaves nucleosomal and liposome-coated DNA. Acts in internucleosomal DNA fragmentation (INDF) during apoptosis and necrosis. The role in apoptosis includes myogenic and neuronal differentiation, and BCR-mediated clonal deletion of self-reactive B cells. Is active on chromatin in apoptotic cell-derived membrane-coated microparticles and thus suppresses anti-DNA autoimmunity. Together with DNASE1, plays a key role in degrading neutrophil extracellular traps (NETs). NETs are mainly composed of DNA fibers and are released by neutrophils to bind pathogens during inflammation. Degradation of intravascular NETs by DNASE1 and DNASE1L3 is required to prevent formation of clots that obstruct blood vessels and cause organ damage following inflammation. The sequence is that of Deoxyribonuclease gamma from Mus musculus (Mouse).